We begin with the raw amino-acid sequence, 405 residues long: MAVNLNPPQAGQLPAVAGVELLVAEAGIKTPGRKDVLVVKLDKGNTVAGVFTRNRFCAAPVQLCQEHLAAGVQIRALVVNTGNANAGTGFDGRARALSVCRAVAERDQLQTEQVLPFSTGVILEPLPADKIVAALPALRQADWAEAAEAIMTTDTLAKAASRRLDIGGKAVTVTGIAKGSGMIHPNMATMLGFVATDAAVTRPMLNQLVREVADQSFNSITVDGDTSTNDSFILISTGQSGAELIDSAEQPAYQQLKQALLEVAIELAQAIVRDGEGATKFITVDVNGGRSVAECKDVAYAIARSPLVKTAFFASDPNLGRLLAAIGYAGVADLDVDRLSLYLDDVLVACEGGRNPAYKEAQGQAVMNQSEITVRVELGRGSASARVWTCDFSYEYVRINADYRS.

Substrate contacts are provided by Thr-152, Lys-178, Thr-189, Glu-276, Asn-400, and Ser-405. Catalysis depends on Thr-189, which acts as the Nucleophile.

It belongs to the ArgJ family. Heterotetramer of two alpha and two beta chains.

The protein localises to the cytoplasm. The catalysed reaction is N(2)-acetyl-L-ornithine + L-glutamate = N-acetyl-L-glutamate + L-ornithine. It carries out the reaction L-glutamate + acetyl-CoA = N-acetyl-L-glutamate + CoA + H(+). Its pathway is amino-acid biosynthesis; L-arginine biosynthesis; L-ornithine and N-acetyl-L-glutamate from L-glutamate and N(2)-acetyl-L-ornithine (cyclic): step 1/1. The protein operates within amino-acid biosynthesis; L-arginine biosynthesis; N(2)-acetyl-L-ornithine from L-glutamate: step 1/4. In terms of biological role, catalyzes two activities which are involved in the cyclic version of arginine biosynthesis: the synthesis of N-acetylglutamate from glutamate and acetyl-CoA as the acetyl donor, and of ornithine by transacetylation between N(2)-acetylornithine and glutamate. This is Arginine biosynthesis bifunctional protein ArgJ from Chromobacterium violaceum (strain ATCC 12472 / DSM 30191 / JCM 1249 / CCUG 213 / NBRC 12614 / NCIMB 9131 / NCTC 9757 / MK).